The primary structure comprises 344 residues: MACEPQMDPGGAAGPLPTSSPGWSPLPGGSPPGWGQELRSGQVLTVLRIDNTCAPISFDLGAAEEQLQTWGIQVPADQYRSLAESALLEPQVRRYIIYNSRPMRLAFAVVFYVVVWANIYSTSQMFALGNHWAGVLLVTLAATSLTLTLVVIFERHQRKANTNTDLRLTAANGALLRHRVLLGVTDTVEGCQSVIQLWFVYFDLETCAQFLSDHIREMKMSQESLLRSRLSQLCVVMETGVSPTANEGPENLLEETPLLPDRPGSTEKPLMQTELRQLVPEAEPEEMAQQLLAVFGGYYTRLLVTSQLPQALGTRHMDSPRIPCPCQLIEAYILGTECCPFLTR.

A disordered region spans residues 1–31; sequence MACEPQMDPGGAAGPLPTSSPGWSPLPGGSP. A compositionally biased stretch (low complexity) spans 14-27; that stretch reads GPLPTSSPGWSPLP. Helical transmembrane passes span 106–126 and 133–153; these read AFAV…SQMF and AGVL…VVIF. The interval 244–266 is disordered; it reads TANEGPENLLEETPLLPDRPGST. The segment covering 247-259 has biased composition (low complexity); it reads EGPENLLEETPLL.

In terms of assembly, interacts with ITGAM; this interaction inhibits ITGAM degradation via the endosome-lysosome pathway. Interacts with ITGB4; this interaction prevents ITGB4 degradation.

The protein resides in the cell membrane. Functionally, stabilizes cell surface expression of ITGAM and participates in the adhesion and migration of phagocytes during bacterial clearance. This Bos taurus (Bovine) protein is Transmembrane protein 268 (TMEM268).